The following is a 336-amino-acid chain: Fructose-1,6-bisphosphatase class 1 (336 aa).

Mg(2+)-binding residues include Glu92, Asp115, Leu117, and Asp118. Substrate contacts are provided by residues 118 to 121 (DGSS), Asn211, Tyr244, 262 to 264 (YLY), and Lys274. Residue Glu280 participates in Mg(2+) binding.

It belongs to the FBPase class 1 family. In terms of assembly, homotetramer. The cofactor is Mg(2+).

It localises to the cytoplasm. It carries out the reaction beta-D-fructose 1,6-bisphosphate + H2O = beta-D-fructose 6-phosphate + phosphate. It participates in carbohydrate biosynthesis; gluconeogenesis. This is Fructose-1,6-bisphosphatase class 1 from Aliivibrio fischeri (strain MJ11) (Vibrio fischeri).